The following is a 426-amino-acid chain: D-amino acid dehydrogenase (426 aa).

3-17 (VVVLGAGVIGVTTAW) is a binding site for FAD.

It belongs to the DadA oxidoreductase family. Requires FAD as cofactor.

The enzyme catalyses a D-alpha-amino acid + A + H2O = a 2-oxocarboxylate + AH2 + NH4(+). It participates in amino-acid degradation; D-alanine degradation; NH(3) and pyruvate from D-alanine: step 1/1. In terms of biological role, oxidative deamination of D-amino acids. This Phenylobacterium zucineum (strain HLK1) protein is D-amino acid dehydrogenase.